A 74-amino-acid polypeptide reads, in one-letter code: uncharacterized protein (74 aa).

Residues 1–19 (MNPGFDAVDQETAAAQAVA) form the signal peptide.

This is an uncharacterized protein from Mycobacterium tuberculosis (strain ATCC 25618 / H37Rv).